We begin with the raw amino-acid sequence, 514 residues long: MQPYLQLASLRLATTIPLAPRLYDANLLAASGAAMASSMAYIALLCAALAAVVALLRWAYRWSHPRSNGRLPPGSLGLPVIGETLQFFAPNPTCDLSPFVKERIKRYGSIFKTSVVGRPVVVSADPEMNYYVFQQEGKLFESWYPDTFTEIFGRDNVGSLHGFMYKYLKTLVLRLYGQENLKSVLLAETDAACRGSLASWASQPSVELKEGISTMIFDLTAKKLIGYDPSKPSQVNLRKNFGAFICGLISFPLNIPGTAYHECMEGRKNAMKVLRGMMKERMAEPERPCEDFFDHVIQELRREKPLLTETIALDLMFVLLFASFETTALALTIGVKLLTENPKVVDALREEHEAIIRNRKDPNSGVTWAEYKSMTFTSQVIMEIVRLANIVPGIFRKALQDVEIKGYTIPAGWGIMVCPPAVHLNPEIYEDPLAFNPWRWQGKPEITGGTKHFMAFGGGLRFCVGTDLSKVLMATFIHSLVTKYSWRTVKGGNIVRTPGLSFPDGFHIQLFPKN.

2 consecutive transmembrane segments (helical) span residues 36-56 (ASSM…VALL) and 315-335 (LMFV…TIGV). Cys463 is a heme binding site.

It belongs to the cytochrome P450 family. Requires heme as cofactor. Expressed in roots and coleoptiles, but not in leaves.

It localises to the cytoplasmic vesicle membrane. The sequence is that of Cytochrome P450 87A3 (CYP87A3) from Oryza sativa subsp. japonica (Rice).